Reading from the N-terminus, the 439-residue chain is uncharacterized protein (439 aa).

The YcaO domain occupies 116-439; it reads GKAASYRAAQ…PMRTPLQEAE (324 aa).

This is an uncharacterized protein from Mycobacterium tuberculosis (strain CDC 1551 / Oshkosh).